A 238-amino-acid polypeptide reads, in one-letter code: Protein G1-like8 (238 aa).

2 disordered regions span residues 1 to 33 (MEGGGGGADGQAQPVAQAPPAMQPMQQLSRYES) and 147 to 238 (KARG…ATRV). Over residues 10–27 (GQAQPVAQAPPAMQPMQQ) the composition is skewed to low complexity. The 128-residue stretch at 30–157 (RYESQKRRDW…ARGIPYEKKK (128 aa)) folds into the ALOG domain. Positions 155 to 159 (KKKRK) match the Nuclear localization signal motif. Residues 165-176 (QPPPPPPPPPQH) are compositionally biased toward pro residues. Low complexity-rich tracts occupy residues 177–213 (QPGAAAGEASSSSSAAAAAVAAEGSGSSAAAAAATSQ) and 222–238 (TTTTTASAAAPTTATRV).

This sequence belongs to the plant homeotic and developmental regulators ALOG protein family.

Its subcellular location is the nucleus. In terms of biological role, probable transcription regulator that acts as a developmental regulator by promoting cell growth in response to light. The sequence is that of Protein G1-like8 (G1L8) from Oryza sativa subsp. japonica (Rice).